A 638-amino-acid chain; its full sequence is Meiosis initiator protein (638 aa).

Disordered regions lie at residues 1–21, 60–79, 138–249, 404–433, and 447–537; these read MFGSSRYLGSSEQPRANSLGP, NQRNQNKLLSPNKKQRKNHT, LAGL…KGGQ, PSAYTQEAPQEKDTASKAPKDPPESHSLHR, and GNSK…PCPP. Over residues 7–20 the composition is skewed to polar residues; that stretch reads YLGSSEQPRANSLG. The tract at residues 62-75 is basic motif; degenerate; sequence RNQNKLLSPNKKQR. The bHLH domain maps to 62–116; it reads RNQNKLLSPNKKQRKNHTSKLQELALLLPIALKTGTKKLTKKEILVHVLQYIQYL. Positions 76-116 are helix-loop-helix motif; the sequence is KNHTSKLQELALLLPIALKTGTKKLTKKEILVHVLQYIQYL. The span at 157–167 shows a compositional bias: low complexity; it reads TPSSSPSSQKS. Over residues 182–191 the composition is skewed to polar residues; it reads TQASESQTRT. Over residues 412 to 430 the composition is skewed to basic and acidic residues; it reads PQEKDTASKAPKDPPESHS. Residues 453-465 show a composition bias toward low complexity; the sequence is SSSSSSSSSSSSS. Basic residues predominate over residues 528-537; that stretch reads KEKKKGPCPP. The segment at residues 540–608 is a DNA-binding region (HMG box); it reads KKKCVNGFIM…QHNRIVKQDG (69 aa).

As to quaternary structure, interacts with STRA8.

The protein localises to the nucleus. Its function is as follows. Gatekeeper of meiotic initiation in both male and female germ cells. In complex with STRA8, directly activates the transcription of a subset of critical meiotic genes playing a central role in cell-cycle switching from mitosis to meiosis. Temporal expression of MEIOSIN is required for meiotic entry decision. The polypeptide is Meiosis initiator protein (Homo sapiens (Human)).